The sequence spans 349 residues: GDP-mannose:glycolipid 4-beta-D-mannosyltransferase (349 aa).

An N-terminal signal peptide occupies residues Met-1–Ala-14.

This sequence belongs to the glycosyltransferase 94 family.

The protein resides in the cell inner membrane. The catalysed reaction is beta-D-GlcA-(1-&gt;2)-alpha-D-Man-(1-&gt;3)-beta-D-Glc-(1-&gt;4)-alpha-D-Glc-di-trans,octa-cis-undecaprenyl diphosphate + GDP-alpha-D-mannose = beta-D-Man-(1-&gt;4)-beta-D-GlcA-(1-&gt;2)-alpha-D-Man-(1-&gt;3)-beta-D-Glc-(1-&gt;4)-alpha-D-Glc-di-trans,octa-cis-undecaprenyl diphosphate + GDP + H(+). The protein operates within glycan biosynthesis; xanthan biosynthesis. In terms of biological role, nonprocessive beta-mannosyltransferase that catalyzes the transfer of a mannose residue from GDP-mannose to glucuronic acid-beta-1,2-mannose-alpha-1,3-glucose-beta-1,4-glucose-PP-polyisoprenyl to form the lipid-linked pentasaccharide repeating unit of xanthan, Man-GlcA-Man-Glc(2)-PP-Pol. Is involved in the biosynthesis of the exopolysaccharide xanthan. This Xanthomonas campestris pv. campestris (strain ATCC 33913 / DSM 3586 / NCPPB 528 / LMG 568 / P 25) protein is GDP-mannose:glycolipid 4-beta-D-mannosyltransferase (gumI).